The sequence spans 123 residues: Urotensin-2 (123 aa).

An N-terminal signal peptide occupies residues 1-20 (MDRVPFCCLLFVGLLNPLLS). Positions 21-104 (FPVTDTGEMS…TVLSRLLART (84 aa)) are excised as a propeptide. The interval 63-91 (EAEGSLGQADPSAETPTPRGSLRKALTGQ) is disordered. A disulfide bond links Cys117 and Cys122.

Belongs to the urotensin-2 family. In terms of tissue distribution, brain specific.

It is found in the secreted. Highly potent vasoconstrictor. The polypeptide is Urotensin-2 (Uts2) (Rattus norvegicus (Rat)).